A 243-amino-acid polypeptide reads, in one-letter code: Transcription factor TFIIS homolog (243 aa).

Residues 77–201 enclose the TFIIS central domain; the sequence is MRDIIQMMFF…SQQKVAEKTS (125 aa). The segment at 202–242 adopts a TFIIS-type zinc-finger fold; it reads QLYKCPNCKQRMCTYREVQTRALDEPSTIFCTCKKCGHEFI. The Zn(2+) site is built by Cys206, Cys209, Cys234, and Cys237.

It belongs to the TFS-II family.

Functionally, putative initiation factor. Necessary for efficient transcription elongation past template-encoded arresting sites. The sequence is that of Transcription factor TFIIS homolog from Ornithodoros (relapsing fever ticks).